The chain runs to 290 residues: tRNA dimethylallyltransferase (290 aa).

Position 11–18 (11–18 (GPTASGKS)) interacts with ATP. A substrate-binding site is contributed by 13–18 (TASGKS). Interaction with substrate tRNA regions lie at residues 36-39 (DSMQ) and 158-162 (QRIVR).

Belongs to the IPP transferase family. As to quaternary structure, monomer. Requires Mg(2+) as cofactor.

The enzyme catalyses adenosine(37) in tRNA + dimethylallyl diphosphate = N(6)-dimethylallyladenosine(37) in tRNA + diphosphate. Functionally, catalyzes the transfer of a dimethylallyl group onto the adenine at position 37 in tRNAs that read codons beginning with uridine, leading to the formation of N6-(dimethylallyl)adenosine (i(6)A). In Bartonella henselae (strain ATCC 49882 / DSM 28221 / CCUG 30454 / Houston 1) (Rochalimaea henselae), this protein is tRNA dimethylallyltransferase.